The sequence spans 212 residues: Telomere repeats-binding bouquet formation protein 2 (212 aa).

Belongs to the TERB2 family. In terms of assembly, component of the MAJIN-TERB1-TERB2 complex.

Meiosis-specific telomere-associated protein involved in meiotic telomere attachment to the nucleus inner membrane, a crucial step for homologous pairing and synapsis. Component of the MAJIN-TERB1-TERB2 complex, which promotes telomere cap exchange by mediating attachment of telomeric DNA to the inner nuclear membrane and replacement of the protective cap of telomeric chromosomes: in early meiosis, the MAJIN-TERB1-TERB2 complex associates with telomeric DNA and the shelterin/telosome complex. During prophase, the complex matures and promotes release of the shelterin/telosome complex from telomeric DNA. This Danio rerio (Zebrafish) protein is Telomere repeats-binding bouquet formation protein 2.